Reading from the N-terminus, the 514-residue chain is Histidine ammonia-lyase (514 aa).

The 5-imidazolinone (Cys-Gly) cross-link spans C143–G145. S144 carries the 2,3-didehydroalanine (Ser) modification.

The protein belongs to the PAL/histidase family. Contains an active site 4-methylidene-imidazol-5-one (MIO), which is formed autocatalytically by cyclization and dehydration of residues Cys-Ser-Gly.

The protein resides in the cytoplasm. The catalysed reaction is L-histidine = trans-urocanate + NH4(+). It functions in the pathway amino-acid degradation; L-histidine degradation into L-glutamate; N-formimidoyl-L-glutamate from L-histidine: step 1/3. This is Histidine ammonia-lyase (hutH) from Streptomyces griseus.